The chain runs to 129 residues: UPF0102 protein Clim_0016 (129 aa).

The protein belongs to the UPF0102 family.

In Chlorobium limicola (strain DSM 245 / NBRC 103803 / 6330), this protein is UPF0102 protein Clim_0016.